The primary structure comprises 288 residues: ATP synthase gamma chain (288 aa).

Belongs to the ATPase gamma chain family. F-type ATPases have 2 components, CF(1) - the catalytic core - and CF(0) - the membrane proton channel. CF(1) has five subunits: alpha(3), beta(3), gamma(1), delta(1), epsilon(1). CF(0) has three main subunits: a, b and c.

It is found in the cell inner membrane. In terms of biological role, produces ATP from ADP in the presence of a proton gradient across the membrane. The gamma chain is believed to be important in regulating ATPase activity and the flow of protons through the CF(0) complex. This chain is ATP synthase gamma chain, found in Vesicomyosocius okutanii subsp. Calyptogena okutanii (strain HA).